The primary structure comprises 185 residues: Elongation factor P (185 aa).

The protein belongs to the elongation factor P family.

It is found in the cytoplasm. Its pathway is protein biosynthesis; polypeptide chain elongation. Its function is as follows. Involved in peptide bond synthesis. Stimulates efficient translation and peptide-bond synthesis on native or reconstituted 70S ribosomes in vitro. Probably functions indirectly by altering the affinity of the ribosome for aminoacyl-tRNA, thus increasing their reactivity as acceptors for peptidyl transferase. In Agathobacter rectalis (strain ATCC 33656 / DSM 3377 / JCM 17463 / KCTC 5835 / VPI 0990) (Eubacterium rectale), this protein is Elongation factor P.